We begin with the raw amino-acid sequence, 258 residues long: Global transcriptional regulator CodY (258 aa).

The tract at residues 1-156 (MSSLLDKTRM…SATIIGLEIL (156 aa)) is GAF domain. The H-T-H motif DNA-binding region spans 204–223 (ASKIADKVGITRSVIVNALR).

It belongs to the CodY family.

The protein localises to the cytoplasm. DNA-binding global transcriptional regulator which is involved in the adaptive response to starvation and acts by directly or indirectly controlling the expression of numerous genes in response to nutrient availability. During rapid exponential growth, CodY is highly active and represses genes whose products allow adaptation to nutrient depletion. This Clostridium botulinum (strain ATCC 19397 / Type A) protein is Global transcriptional regulator CodY.